The primary structure comprises 358 residues: Ion-translocating oxidoreductase complex subunit D (358 aa).

4 consecutive transmembrane segments (helical) span residues 19 to 39 (IMLW…YYFG), 41 to 61 (GVLL…FIAI), 79 to 99 (LTAL…VIII), and 125 to 145 (IGYV…MPPI). Position 186 is an FMN phosphoryl threonine (Thr186). Helical transmembrane passes span 220–240 (FAQG…FLIL), 248–268 (IPVA…FTGF), 271–291 (LSAI…FIAT), 297–317 (SITP…VYLI), and 321–341 (GNYP…VPLI).

The protein belongs to the NqrB/RnfD family. The complex is composed of six subunits: RnfA, RnfB, RnfC, RnfD, RnfE and RnfG. The cofactor is FMN.

It is found in the cell inner membrane. In terms of biological role, part of a membrane-bound complex that couples electron transfer with translocation of ions across the membrane. This chain is Ion-translocating oxidoreductase complex subunit D, found in Haemophilus influenzae (strain PittEE).